Reading from the N-terminus, the 309-residue chain is Methionyl-tRNA formyltransferase (309 aa).

107 to 110 (SLLP) contacts (6S)-5,6,7,8-tetrahydrofolate.

This sequence belongs to the Fmt family.

The enzyme catalyses L-methionyl-tRNA(fMet) + (6R)-10-formyltetrahydrofolate = N-formyl-L-methionyl-tRNA(fMet) + (6S)-5,6,7,8-tetrahydrofolate + H(+). Attaches a formyl group to the free amino group of methionyl-tRNA(fMet). The formyl group appears to play a dual role in the initiator identity of N-formylmethionyl-tRNA by promoting its recognition by IF2 and preventing the misappropriation of this tRNA by the elongation apparatus. This is Methionyl-tRNA formyltransferase from Borrelia recurrentis (strain A1).